A 572-amino-acid polypeptide reads, in one-letter code: Capsid vertex component 2 (572 aa).

An interaction with major capsid protein/MCP region spans residues 1–58 (MFRPRFEPMNLPKDSNKPSTLMVLADRLNFISCAEGSSKYASKLFEGTLIDAEIMTNR).

This sequence belongs to the herpesviridae CVC2 protein family. As to quaternary structure, heterodimerizes with CVC1. Interacts with major capsid protein/MCP and triplex capsid protein 1/TRX1 at the pentamer vertices. Interacts with the large tegument protein/LTP.

The protein resides in the virion. It is found in the host nucleus. Capsid vertex-specific component that plays a role during viral DNA encapsidation, assuring correct genome cleavage and presumably stabilizing capsids that contain full-length viral genomes. Participates in the interaction between the capsid and the tegument through interaction with the large tegument protein/LTP. This is Capsid vertex component 2 from Infectious laryngotracheitis virus (strain Thorne V882) (ILTV).